The following is a 283-amino-acid chain: Elongation factor Ts (283 aa).

Positions threonine 80–valine 83 are involved in Mg(2+) ion dislocation from EF-Tu.

This sequence belongs to the EF-Ts family.

It is found in the cytoplasm. In terms of biological role, associates with the EF-Tu.GDP complex and induces the exchange of GDP to GTP. It remains bound to the aminoacyl-tRNA.EF-Tu.GTP complex up to the GTP hydrolysis stage on the ribosome. The protein is Elongation factor Ts of Histophilus somni (strain 129Pt) (Haemophilus somnus).